Reading from the N-terminus, the 142-residue chain is Large ribosomal subunit protein uL13 (142 aa).

Belongs to the universal ribosomal protein uL13 family. Part of the 50S ribosomal subunit.

Its function is as follows. This protein is one of the early assembly proteins of the 50S ribosomal subunit, although it is not seen to bind rRNA by itself. It is important during the early stages of 50S assembly. The protein is Large ribosomal subunit protein uL13 of Thioalkalivibrio sulfidiphilus (strain HL-EbGR7).